The chain runs to 492 residues: Cobyric acid synthase (492 aa).

The GATase cobBQ-type domain maps to 259 to 453 (HTTVAVVAYP…LHGLFEDAVA (195 aa)). The Nucleophile role is filled by Cys340. Residue His445 is part of the active site.

Belongs to the CobB/CobQ family. CobQ subfamily.

Its pathway is cofactor biosynthesis; adenosylcobalamin biosynthesis. Functionally, catalyzes amidations at positions B, D, E, and G on adenosylcobyrinic A,C-diamide. NH(2) groups are provided by glutamine, and one molecule of ATP is hydrogenolyzed for each amidation. The sequence is that of Cobyric acid synthase from Paracidovorax citrulli (strain AAC00-1) (Acidovorax citrulli).